A 348-amino-acid polypeptide reads, in one-letter code: Holliday junction branch migration complex subunit RuvB (348 aa).

Positions 4–184 are large ATPase domain (RuvB-L); the sequence is TDRLIAASGR…FGIVQRLEFY (181 aa). Residues isoleucine 23, arginine 24, glycine 65, lysine 68, threonine 69, threonine 70, 131-133, arginine 174, tyrosine 184, and arginine 221 each bind ATP; that span reads EDF. Position 69 (threonine 69) interacts with Mg(2+). A small ATPAse domain (RuvB-S) region spans residues 185–255; the sequence is SNKDLATIVS…VADMALNLLD (71 aa). Residues 258-348 form a head domain (RuvB-H) region; the sequence is ERGFDHSDRR…GGEYAAQDDE (91 aa). The DNA site is built by arginine 294, arginine 313, and arginine 318.

This sequence belongs to the RuvB family. In terms of assembly, homohexamer. Forms an RuvA(8)-RuvB(12)-Holliday junction (HJ) complex. HJ DNA is sandwiched between 2 RuvA tetramers; dsDNA enters through RuvA and exits via RuvB. An RuvB hexamer assembles on each DNA strand where it exits the tetramer. Each RuvB hexamer is contacted by two RuvA subunits (via domain III) on 2 adjacent RuvB subunits; this complex drives branch migration. In the full resolvosome a probable DNA-RuvA(4)-RuvB(12)-RuvC(2) complex forms which resolves the HJ.

It is found in the cytoplasm. The enzyme catalyses ATP + H2O = ADP + phosphate + H(+). The RuvA-RuvB-RuvC complex processes Holliday junction (HJ) DNA during genetic recombination and DNA repair, while the RuvA-RuvB complex plays an important role in the rescue of blocked DNA replication forks via replication fork reversal (RFR). RuvA specifically binds to HJ cruciform DNA, conferring on it an open structure. The RuvB hexamer acts as an ATP-dependent pump, pulling dsDNA into and through the RuvAB complex. RuvB forms 2 homohexamers on either side of HJ DNA bound by 1 or 2 RuvA tetramers; 4 subunits per hexamer contact DNA at a time. Coordinated motions by a converter formed by DNA-disengaged RuvB subunits stimulates ATP hydrolysis and nucleotide exchange. Immobilization of the converter enables RuvB to convert the ATP-contained energy into a lever motion, pulling 2 nucleotides of DNA out of the RuvA tetramer per ATP hydrolyzed, thus driving DNA branch migration. The RuvB motors rotate together with the DNA substrate, which together with the progressing nucleotide cycle form the mechanistic basis for DNA recombination by continuous HJ branch migration. Branch migration allows RuvC to scan DNA until it finds its consensus sequence, where it cleaves and resolves cruciform DNA. This chain is Holliday junction branch migration complex subunit RuvB, found in Pseudomonas entomophila (strain L48).